Reading from the N-terminus, the 234-residue chain is MAKTRPGVASKIKTGRKELDSYTIKGTNKVVRAGDCVLMRPSDAGKPPYVARVEKIEADARNNVKVHCRWYYRPEESLGGRRQFHGAKELFLSDHFDVQSAHTIEGKCIVHTFKNYTRLENVGAEDYYCRFEYKAATGAFTPDRVAVYCKCEMPYNPDDLMVQCEGCKDWYHPACVGMTIEEAKKLDHFVCAECSSDDDVKKSQNGFTSSPADDVKVRLSLFSHLLYRCSITYL.

The BAH domain occupies 29-144 (KVVRAGDCVL…AATGAFTPDR (116 aa)). A PHD-type zinc finger spans residues 146-197 (AVYCKCEMPYNPDDLMVQCEGCKDWYHPACVGMTIEEAKKLDHFVCAECSSD).

It belongs to the SHL1/EBS protein family. Recognizes di- and trimethylated histone H3 at lysine 4 (H3K4me2 and H3K4me3). Interacts with HDA6. As to expression, expressed ubiquitously, with higher levels in floral buds.

The protein localises to the nucleus. In terms of biological role, chromatin remodeling factor that binds to methylated histone (e.g. H3K4me2/3) to prevent their acetylation (e.g. H3K9K14Ac), likely by recruiting histone deacetylase (HDAC) complexes, and thus regulating the transcription of target genes. Negative regulator in developmental processes in a gibberellic acid- (GA-) dependent manner, such as germination, flowering induction, and flower organ specification, probably by modulating developmental gene expression. Involved in the chromatin-mediated repression of floral initiation and controls genes regulating flowering. Negatively regulates the expression of the floral integrator FT epigenetically, by preventing high levels of H3 acetylation, thus maintaining an inactive chromatin conformation at FT locus. This Arabidopsis thaliana (Mouse-ear cress) protein is Chromatin remodeling protein EBS.